We begin with the raw amino-acid sequence, 209 residues long: Large ribosomal subunit protein uL3 (209 aa).

The disordered stretch occupies residues 124-156 (KRHNFSGGQRTHGQSDRQRAPGSVGGSSDPSRV).

It belongs to the universal ribosomal protein uL3 family. Part of the 50S ribosomal subunit. Forms a cluster with proteins L14 and L19.

One of the primary rRNA binding proteins, it binds directly near the 3'-end of the 23S rRNA, where it nucleates assembly of the 50S subunit. The chain is Large ribosomal subunit protein uL3 from Pelodictyon phaeoclathratiforme (strain DSM 5477 / BU-1).